The sequence spans 203 residues: Ras-like protein family member 10A (203 aa).

Residues 1–203 (MGGSLRVAVL…ALHPARCSLM (203 aa)) form a small GTPase-like region. 11–18 (GAPGVGKT) contributes to the GTP binding site. An Effector region motif is present at residues 33 to 42 (HRPTDSPCLY). GTP is bound by residues 59–62 (DGDV) and 129–132 (NKRD). At Cys200 the chain carries Cysteine methyl ester. Residue Cys200 is the site of S-farnesyl cysteine attachment. Residues 201–203 (SLM) constitute a propeptide, removed in mature form.

This sequence belongs to the small GTPase superfamily. Ras family. In terms of processing, isoprenylation is essential for nucleolar localization, and the proliferation-inhibiting activity of RASL10A.

Its subcellular location is the cell membrane. It is found in the nucleus. The protein localises to the nucleolus. The enzyme catalyses GTP + H2O = GDP + phosphate + H(+). Functionally, potent inhibitor of cellular proliferation. The polypeptide is Ras-like protein family member 10A (Rasl10a) (Mus musculus (Mouse)).